The following is a 382-amino-acid chain: Alkanesulfonate monooxygenase (382 aa).

This sequence belongs to the SsuD family.

The catalysed reaction is an alkanesulfonate + FMNH2 + O2 = an aldehyde + FMN + sulfite + H2O + 2 H(+). In terms of biological role, catalyzes the desulfonation of aliphatic sulfonates. This Pseudomonas putida (strain ATCC 700007 / DSM 6899 / JCM 31910 / BCRC 17059 / LMG 24140 / F1) protein is Alkanesulfonate monooxygenase.